Consider the following 108-residue polypeptide: Tyrosine-protein phosphatase 5 (108 aa).

A Tyrosine-protein phosphatase domain is found at 1-108 (QESTVIVMLT…QGNNPSPIIV (108 aa)). Asp78 contributes to the substrate binding site.

It belongs to the protein-tyrosine phosphatase family.

It catalyses the reaction O-phospho-L-tyrosyl-[protein] + H2O = L-tyrosyl-[protein] + phosphate. This chain is Tyrosine-protein phosphatase 5 (STY-5), found in Styela plicata (Wrinkled sea squirt).